A 375-amino-acid polypeptide reads, in one-letter code: Lipid-A-disaccharide synthase (375 aa).

This sequence belongs to the LpxB family.

The enzyme catalyses a lipid X + a UDP-2-N,3-O-bis[(3R)-3-hydroxyacyl]-alpha-D-glucosamine = a lipid A disaccharide + UDP + H(+). It participates in bacterial outer membrane biogenesis; LPS lipid A biosynthesis. Condensation of UDP-2,3-diacylglucosamine and 2,3-diacylglucosamine-1-phosphate to form lipid A disaccharide, a precursor of lipid A, a phosphorylated glycolipid that anchors the lipopolysaccharide to the outer membrane of the cell. The polypeptide is Lipid-A-disaccharide synthase (Pseudomonas putida (strain W619)).